The primary structure comprises 115 residues: UPF0125 protein VP0646 (115 aa).

The disordered stretch occupies residues 92–115 (RAEQAKAAGNADPVTGGKPNALRK).

The protein belongs to the UPF0125 (RnfH) family.

The protein is UPF0125 protein VP0646 of Vibrio parahaemolyticus serotype O3:K6 (strain RIMD 2210633).